A 366-amino-acid chain; its full sequence is Spermidine/putrescine import ATP-binding protein PotA (366 aa).

The region spanning 8–239 (IRFENVTKQF…PINKFVADFI (232 aa)) is the ABC transporter domain. 41–48 (GPSGCGKT) serves as a coordination point for ATP.

The protein belongs to the ABC transporter superfamily. Spermidine/putrescine importer (TC 3.A.1.11.1) family. In terms of assembly, the complex is composed of two ATP-binding proteins (PotA), two transmembrane proteins (PotB and PotC) and a solute-binding protein (PotD).

It localises to the cell membrane. The catalysed reaction is ATP + H2O + polyamine-[polyamine-binding protein]Side 1 = ADP + phosphate + polyamineSide 2 + [polyamine-binding protein]Side 1.. In terms of biological role, part of the ABC transporter complex PotABCD involved in spermidine/putrescine import. Responsible for energy coupling to the transport system. In Listeria monocytogenes serovar 1/2a (strain ATCC BAA-679 / EGD-e), this protein is Spermidine/putrescine import ATP-binding protein PotA.